A 179-amino-acid polypeptide reads, in one-letter code: Fas apoptotic inhibitory molecule 1 (179 aa).

Residue Thr2 is modified to N-acetylthreonine.

It belongs to the FAIM1 family. As to expression, widely expressed, with the highest levels in brain, thymus, kidney, and spleen.

It localises to the cytoplasm. Plays a role as an inducible effector molecule that mediates Fas resistance produced by surface Ig engagement in B cells. The sequence is that of Fas apoptotic inhibitory molecule 1 (Faim) from Mus musculus (Mouse).